The sequence spans 341 residues: RNA 3'-terminal phosphate cyclase (341 aa).

Residues Q102 and 283-287 (HLADQ) contribute to the ATP site. H308 (tele-AMP-histidine intermediate) is an active-site residue.

The protein belongs to the RNA 3'-terminal cyclase family. Type 1 subfamily.

The protein resides in the cytoplasm. The enzyme catalyses a 3'-end 3'-phospho-ribonucleotide-RNA + ATP = a 3'-end 2',3'-cyclophospho-ribonucleotide-RNA + AMP + diphosphate. In terms of biological role, catalyzes the conversion of 3'-phosphate to a 2',3'-cyclic phosphodiester at the end of RNA. The mechanism of action of the enzyme occurs in 3 steps: (A) adenylation of the enzyme by ATP; (B) transfer of adenylate to an RNA-N3'P to produce RNA-N3'PP5'A; (C) and attack of the adjacent 2'-hydroxyl on the 3'-phosphorus in the diester linkage to produce the cyclic end product. The biological role of this enzyme is unknown but it is likely to function in some aspects of cellular RNA processing. The chain is RNA 3'-terminal phosphate cyclase from Pseudomonas aeruginosa (strain UCBPP-PA14).